Consider the following 361-residue polypeptide: tRNA-specific 2-thiouridylase MnmA (361 aa).

ATP-binding positions include 11–18 and methionine 37; that span reads GMSGGVDS. Residue cysteine 106 is the Nucleophile of the active site. An intrachain disulfide couples cysteine 106 to cysteine 202. Residue glycine 130 participates in ATP binding. Positions 152-154 are interaction with tRNA; that stretch reads KDQ. Residue cysteine 202 is the Cysteine persulfide intermediate of the active site. Residues 308–309 form an interaction with tRNA region; sequence RY.

It belongs to the MnmA/TRMU family.

The protein localises to the cytoplasm. It catalyses the reaction S-sulfanyl-L-cysteinyl-[protein] + uridine(34) in tRNA + AH2 + ATP = 2-thiouridine(34) in tRNA + L-cysteinyl-[protein] + A + AMP + diphosphate + H(+). Its function is as follows. Catalyzes the 2-thiolation of uridine at the wobble position (U34) of tRNA, leading to the formation of s(2)U34. This Clostridium botulinum (strain Alaska E43 / Type E3) protein is tRNA-specific 2-thiouridylase MnmA.